The following is a 358-amino-acid chain: Peptide chain release factor 1 (358 aa).

Gln-235 is modified (N5-methylglutamine).

The protein belongs to the prokaryotic/mitochondrial release factor family. Methylated by PrmC. Methylation increases the termination efficiency of RF1.

It is found in the cytoplasm. Functionally, peptide chain release factor 1 directs the termination of translation in response to the peptide chain termination codons UAG and UAA. The sequence is that of Peptide chain release factor 1 from Neisseria meningitidis serogroup B (strain ATCC BAA-335 / MC58).